Reading from the N-terminus, the 34-residue chain is MSDINATRLPAWLVDCPCVGDDVNRLLTRGESLC.

Residues 1-10 (MSDINATRLP) constitute a propeptide that is removed on maturation. Residues 11–17 (AWLVDCP) constitute a cross-link (cyclopeptide (Ala-Pro)). A cross-link (2'-cysteinyl-6'-hydroxytryptophan sulfoxide (Trp-Cys)) is located at residues 12–16 (WLVDC). Positions 18–34 (CVGDDVNRLLTRGESLC) are excised as a propeptide.

The protein belongs to the MSDIN fungal toxin family. In terms of processing, processed by the macrocyclase-peptidase enzyme POPB to yield a toxic cyclic heptapeptide. POPB first removes 10 residues from the N-terminus. Conformational trapping of the remaining peptide forces the enzyme to release this intermediate rather than proceed to macrocyclization. The enzyme rebinds the remaining peptide in a different conformation and catalyzes macrocyclization of the N-terminal 7 residues.

Major toxin that belongs to the bicyclic heptapeptides called phallotoxins. Although structurally related to amatoxins, phallotoxins have a different mode of action, which is the stabilization of F-actin. Phallotoxins are poisonous when administered parenterally, but not orally because of poor absorption. This chain is Phallacidin proprotein 1, found in Amanita bisporigera (Destroying angel).